We begin with the raw amino-acid sequence, 228 residues long: ATP-dependent dethiobiotin synthetase BioD 1 (228 aa).

Residue 13 to 18 coordinates ATP; sequence EVGKTV. Position 17 (Thr-17) interacts with Mg(2+). The active site involves Lys-38. Ser-42 is a substrate binding site. Residues Asp-55, 116-119, 176-177, and 205-207 contribute to the ATP site; these read EGAG, ND, and PWL. 2 residues coordinate Mg(2+): Asp-55 and Glu-116.

The protein belongs to the dethiobiotin synthetase family. As to quaternary structure, homodimer. The cofactor is Mg(2+).

Its subcellular location is the cytoplasm. It carries out the reaction (7R,8S)-7,8-diammoniononanoate + CO2 + ATP = (4R,5S)-dethiobiotin + ADP + phosphate + 3 H(+). The protein operates within cofactor biosynthesis; biotin biosynthesis; biotin from 7,8-diaminononanoate: step 1/2. Functionally, catalyzes a mechanistically unusual reaction, the ATP-dependent insertion of CO2 between the N7 and N8 nitrogen atoms of 7,8-diaminopelargonic acid (DAPA, also called 7,8-diammoniononanoate) to form a ureido ring. In Salmonella typhi, this protein is ATP-dependent dethiobiotin synthetase BioD 1.